The following is a 178-amino-acid chain: Large ribosomal subunit protein uL6 (178 aa).

Belongs to the universal ribosomal protein uL6 family. Part of the 50S ribosomal subunit.

Its function is as follows. This protein binds to the 23S rRNA, and is important in its secondary structure. It is located near the subunit interface in the base of the L7/L12 stalk, and near the tRNA binding site of the peptidyltransferase center. The polypeptide is Large ribosomal subunit protein uL6 (Helicobacter pylori (strain G27)).